A 196-amino-acid chain; its full sequence is Carnitine operon protein CaiE (196 aa).

Positions Leu176 to Arg196 are disordered.

Belongs to the transferase hexapeptide repeat family.

The protein operates within amine and polyamine metabolism; carnitine metabolism. In terms of biological role, overproduction of CaiE stimulates the activity of CaiB and CaiD. The chain is Carnitine operon protein CaiE from Escherichia fergusonii (strain ATCC 35469 / DSM 13698 / CCUG 18766 / IAM 14443 / JCM 21226 / LMG 7866 / NBRC 102419 / NCTC 12128 / CDC 0568-73).